A 1180-amino-acid chain; its full sequence is Integrin alpha-1 (1180 aa).

An N-terminal signal peptide occupies residues 1 to 28 (MVPRRPASLEVTVACIWLLTVILGFCVS). Over 29-1142 (FNVDVKNSMS…SKDGLPGRVP (1114 aa)) the chain is Extracellular. The FG-GAP 1 repeat unit spans residues 30–91 (NVDVKNSMSF…CPVGRERAMP (62 aa)). A disulfide bond links Cys-82 and Cys-92. Asn-100, Asn-105, Asn-112, Asn-217, Asn-317, Asn-341, Asn-402, Asn-418, and Asn-459 each carry an N-linked (GlcNAc...) asparagine glycan. The stretch at 101 to 160 (TSIPNVTEIKENMTFGSTLVTNPNGGFLACGPLYAYRCGHLHYTTGICSDVSPTFQVVNS) is one FG-GAP 2 repeat. One can recognise a VWFA domain in the interval 175–364 (IVLDGSNSIY…LGERIFALEA (190 aa)). One copy of the FG-GAP 3 repeat lies at 365-417 (TADQSAASFEMEMSQTGFSAHYSQDWVMLGAVGAYDWNGTVVMQKANQMVIPH). FG-GAP repeat units lie at residues 422–474 (QTEP…DGNI), 475–537 (NILQ…RFEY), 556–614 (SCTK…TIRE), and 618–678 (QRIP…FEPN). Asp-497, Asp-499, Asp-501, and Asp-505 together coordinate Ca(2+). The N-linked (GlcNAc...) asparagine glycan is linked to Asn-531. 8 residues coordinate Ca(2+): Asp-579, Asn-581, Asp-583, Asp-587, Asp-641, Asn-643, Asp-645, and Asp-649. Cysteines 687 and 696 form a disulfide. N-linked (GlcNAc...) asparagine glycans are attached at residues Asn-698, Asn-747, and Asn-779. Residues Cys-702 and Cys-755 are joined by a disulfide bond. Cys-807 and Cys-813 form a disulfide bridge. Residues Asn-820, Asn-839, Asn-882, Asn-907, Asn-938, Asn-965, Asn-973, and Asn-1007 are each glycosylated (N-linked (GlcNAc...) asparagine). Cys-877 and Cys-885 form a disulfide bridge. 2 cysteine pairs are disulfide-bonded: Cys-1029–Cys-1062 and Cys-1066–Cys-1073. Asn-1084, Asn-1103, and Asn-1114 each carry an N-linked (GlcNAc...) asparagine glycan. A helical transmembrane segment spans residues 1143–1165 (LWVILLSAFAGLLLLMLLILALW). Over 1166 to 1180 (KIGFFKRPLKKKMEK) the chain is Cytoplasmic. The GFFKR motif signature appears at 1168–1172 (GFFKR).

Belongs to the integrin alpha chain family. Heterodimer of an alpha and a beta subunit. Alpha-1 associates with beta-1. Interacts with RAB21. Interacts (via cytoplasmic domain) with PTPN2; activates PTPN2 phosphatase activity towards EGFR and negatively regulates EGF signaling.

Its subcellular location is the membrane. In terms of biological role, integrin alpha-1/beta-1 is a receptor for laminin and collagen. It recognizes the proline-hydroxylated sequence G-F-P-G-E-R in collagen. Involved in anchorage-dependent, negative regulation of EGF-stimulated cell growth. The polypeptide is Integrin alpha-1 (Itga1) (Rattus norvegicus (Rat)).